A 335-amino-acid polypeptide reads, in one-letter code: ATP-dependent 6-phosphofructokinase (335 aa).

G11 contributes to the ATP binding site. Position 21 to 25 (21 to 25 (RAVVR)) interacts with ADP. ATP-binding positions include 72 to 73 (RY) and 102 to 105 (GDGS). A Mg(2+)-binding site is contributed by D103. Position 125–127 (125–127 (TID)) interacts with substrate. The active-site Proton acceptor is the D127. R154 is an ADP binding site. Substrate contacts are provided by residues R162 and 169 to 171 (MGR). ADP contacts are provided by residues 185–187 (GAD) and 213–215 (KKH). Substrate contacts are provided by residues E222, R244, and 250-253 (HIQR).

It belongs to the phosphofructokinase type A (PFKA) family. ATP-dependent PFK group I subfamily. Prokaryotic clade 'B1' sub-subfamily. Homotetramer. Mg(2+) serves as cofactor.

It is found in the cytoplasm. It carries out the reaction beta-D-fructose 6-phosphate + ATP = beta-D-fructose 1,6-bisphosphate + ADP + H(+). It functions in the pathway carbohydrate degradation; glycolysis; D-glyceraldehyde 3-phosphate and glycerone phosphate from D-glucose: step 3/4. Its activity is regulated as follows. Allosterically activated by ADP and other diphosphonucleosides, and allosterically inhibited by phosphoenolpyruvate. In terms of biological role, catalyzes the phosphorylation of D-fructose 6-phosphate to fructose 1,6-bisphosphate by ATP, the first committing step of glycolysis. The chain is ATP-dependent 6-phosphofructokinase from Streptococcus pneumoniae serotype 4 (strain ATCC BAA-334 / TIGR4).